A 303-amino-acid chain; its full sequence is Probable 5-dehydro-4-deoxyglucarate dehydratase (303 aa).

The protein belongs to the DapA family.

The enzyme catalyses 5-dehydro-4-deoxy-D-glucarate + H(+) = 2,5-dioxopentanoate + CO2 + H2O. It participates in carbohydrate acid metabolism; D-glucarate degradation; 2,5-dioxopentanoate from D-glucarate: step 2/2. The sequence is that of Probable 5-dehydro-4-deoxyglucarate dehydratase from Pseudomonas putida (strain ATCC 700007 / DSM 6899 / JCM 31910 / BCRC 17059 / LMG 24140 / F1).